Reading from the N-terminus, the 201-residue chain is Recombination protein RecR (201 aa).

The C4-type zinc finger occupies 60-75 (CTSCGNVDTSDPCTIC). Positions 83 to 178 (TTLVVVEDVS…KVTRLAHGVP (96 aa)) constitute a Toprim domain.

It belongs to the RecR family.

Its function is as follows. May play a role in DNA repair. It seems to be involved in an RecBC-independent recombinational process of DNA repair. It may act with RecF and RecO. The protein is Recombination protein RecR of Methylobacterium radiotolerans (strain ATCC 27329 / DSM 1819 / JCM 2831 / NBRC 15690 / NCIMB 10815 / 0-1).